A 437-amino-acid chain; its full sequence is Probable exopolygalacturonase C (437 aa).

The first 21 residues, 1 to 21, serve as a signal peptide directing secretion; sequence MLITKTAFLAFLLSSVPLAHG. Asn-25, Asn-42, Asn-82, Asn-99, and Asn-149 each carry an N-linked (GlcNAc...) asparagine glycan. 2 PbH1 repeats span residues 215–236 and 238–259; these read GTNIRISDSIMYNGDDAIAVGS and SHNIVFERNTIGYQSHGMSIGS. Asp-229 serves as the catalytic Proton donor. The active site involves His-253. Residue Asn-269 is glycosylated (N-linked (GlcNAc...) asparagine). 2 PbH1 repeats span residues 270 to 291 and 299 to 320; these read ITNLRFEDVTVIDALYAARFKS and VKNVTWKNIRVYNVTFPIFVTQ. Residues Asn-301 and Asn-311 are each glycosylated (N-linked (GlcNAc...) asparagine). A disulfide bridge connects residues Cys-386 and Cys-392. 2 N-linked (GlcNAc...) asparagine glycosylation sites follow: Asn-428 and Asn-431.

The protein belongs to the glycosyl hydrolase 28 family.

Its subcellular location is the secreted. It catalyses the reaction [(1-&gt;4)-alpha-D-galacturonosyl](n) + H2O = alpha-D-galacturonate + [(1-&gt;4)-alpha-D-galacturonosyl](n-1). Its function is as follows. Specific in hydrolyzing the terminal glycosidic bond of polygalacturonic acid and oligogalacturonates. This chain is Probable exopolygalacturonase C (pgxC), found in Aspergillus flavus (strain ATCC 200026 / FGSC A1120 / IAM 13836 / NRRL 3357 / JCM 12722 / SRRC 167).